The chain runs to 104 residues: MQKIRRDDEIIVIAGKDKGKRGKVLKVLADDRLVVGGINLVKRHTKPNPMSGVQGGIVEKEAPMHASNVAIFNGATNKADRVGFKVEDGKKIRVFKSTQKAVDA.

The protein belongs to the universal ribosomal protein uL24 family. In terms of assembly, part of the 50S ribosomal subunit.

In terms of biological role, one of two assembly initiator proteins, it binds directly to the 5'-end of the 23S rRNA, where it nucleates assembly of the 50S subunit. Its function is as follows. One of the proteins that surrounds the polypeptide exit tunnel on the outside of the subunit. The sequence is that of Large ribosomal subunit protein uL24 from Pseudomonas syringae pv. syringae (strain B728a).